Reading from the N-terminus, the 121-residue chain is uncharacterized protein (121 aa).

The tract at residues 20-98 is disordered; the sequence is NEVRTSQSEV…PYYHGSKAST (79 aa). A compositionally biased stretch (basic and acidic residues) spans 35 to 51; that stretch reads KKSDNGEKDEKEEKELN.

This is an uncharacterized protein from Invertebrate iridescent virus 6 (IIV-6).